The sequence spans 419 residues: Creatine kinase S-type, mitochondrial (419 aa).

A mitochondrion-targeting transit peptide spans 1–39 (MASAFSKLLTGRNASLLFTTLGTSALTTGYLLNRQKVSA). Residues 40-64 (DAREQHKLFPPSADYPDLRKHNNCM) are cardiolipin-binding. In terms of domain architecture, Phosphagen kinase N-terminal spans 46–132 (KLFPPSADYP…FDPVIKLRHN (87 aa)). The 243-residue stretch at 159 to 401 (YVLSSRVRTG…NYLVDCEKKL (243 aa)) folds into the Phosphagen kinase C-terminal domain. ATP contacts are provided by residues 162-166 (SSRVR) and His-225. Residue Tyr-255 is modified to Phosphotyrosine. ATP contacts are provided by residues Arg-270, Arg-326, 354–359 (RGTGGV), and Asp-369. Thr-356 carries the phosphothreonine modification.

The protein belongs to the ATP:guanido phosphotransferase family. Exists as an octamer composed of four CKMT2 homodimers.

Its subcellular location is the mitochondrion inner membrane. The catalysed reaction is creatine + ATP = N-phosphocreatine + ADP + H(+). In terms of biological role, reversibly catalyzes the transfer of phosphate between ATP and various phosphogens (e.g. creatine phosphate). Creatine kinase isoenzymes play a central role in energy transduction in tissues with large, fluctuating energy demands, such as skeletal muscle, heart, brain and spermatozoa. The chain is Creatine kinase S-type, mitochondrial (Ckmt2) from Mus musculus (Mouse).